Here is a 319-residue protein sequence, read N- to C-terminus: 7,8-didemethyl-8-hydroxy-5-deazariboflavin synthase (319 aa).

In terms of domain architecture, Radical SAM core spans 5–236; the sequence is VTYSPAYTIV…SNITLQIPPN (232 aa). The [4Fe-4S] cluster site is built by Cys19, Cys23, and Cys26.

The protein belongs to the radical SAM superfamily. CofG family. Consists of two subunits, CofG and CofH. [4Fe-4S] cluster is required as a cofactor.

The catalysed reaction is 5-amino-5-(4-hydroxybenzyl)-6-(D-ribitylimino)-5,6-dihydrouracil + S-adenosyl-L-methionine = 7,8-didemethyl-8-hydroxy-5-deazariboflavin + 5'-deoxyadenosine + L-methionine + NH4(+) + H(+). Its pathway is cofactor biosynthesis; coenzyme F0 biosynthesis. Functionally, catalyzes the radical-mediated synthesis of 7,8-didemethyl-8-hydroxy-5-deazariboflavin from 5-amino-5-(4-hydroxybenzyl)-6-(D-ribitylimino)-5,6-dihydrouracil. This is 7,8-didemethyl-8-hydroxy-5-deazariboflavin synthase from Trichodesmium erythraeum (strain IMS101).